A 272-amino-acid polypeptide reads, in one-letter code: Shikimate dehydrogenase (NADP(+)) (272 aa).

Shikimate is bound by residues 14–16 (SKS) and Thr61. Residue Lys65 is the Proton acceptor of the active site. Glu77 contributes to the NADP(+) binding site. Shikimate-binding residues include Asn86 and Asp102. Residues 126 to 130 (GAGGA), 149 to 154 (NRTFSR), and Met213 contribute to the NADP(+) site. Residue Tyr215 coordinates shikimate. Position 237 (Gly237) interacts with NADP(+).

Belongs to the shikimate dehydrogenase family. Homodimer.

The enzyme catalyses shikimate + NADP(+) = 3-dehydroshikimate + NADPH + H(+). It participates in metabolic intermediate biosynthesis; chorismate biosynthesis; chorismate from D-erythrose 4-phosphate and phosphoenolpyruvate: step 4/7. In terms of biological role, involved in the biosynthesis of the chorismate, which leads to the biosynthesis of aromatic amino acids. Catalyzes the reversible NADPH linked reduction of 3-dehydroshikimate (DHSA) to yield shikimate (SA). This is Shikimate dehydrogenase (NADP(+)) from Photorhabdus laumondii subsp. laumondii (strain DSM 15139 / CIP 105565 / TT01) (Photorhabdus luminescens subsp. laumondii).